The sequence spans 209 residues: Imidazole glycerol phosphate synthase subunit HisH (209 aa).

Residues Lys3–Lys209 enclose the Glutamine amidotransferase type-1 domain. Catalysis depends on Cys81, which acts as the Nucleophile. Active-site residues include His190 and Glu192.

Heterodimer of HisH and HisF.

It localises to the cytoplasm. The enzyme catalyses 5-[(5-phospho-1-deoxy-D-ribulos-1-ylimino)methylamino]-1-(5-phospho-beta-D-ribosyl)imidazole-4-carboxamide + L-glutamine = D-erythro-1-(imidazol-4-yl)glycerol 3-phosphate + 5-amino-1-(5-phospho-beta-D-ribosyl)imidazole-4-carboxamide + L-glutamate + H(+). It carries out the reaction L-glutamine + H2O = L-glutamate + NH4(+). It functions in the pathway amino-acid biosynthesis; L-histidine biosynthesis; L-histidine from 5-phospho-alpha-D-ribose 1-diphosphate: step 5/9. In terms of biological role, IGPS catalyzes the conversion of PRFAR and glutamine to IGP, AICAR and glutamate. The HisH subunit catalyzes the hydrolysis of glutamine to glutamate and ammonia as part of the synthesis of IGP and AICAR. The resulting ammonia molecule is channeled to the active site of HisF. The sequence is that of Imidazole glycerol phosphate synthase subunit HisH from Geobacter sulfurreducens (strain ATCC 51573 / DSM 12127 / PCA).